Here is a 222-residue protein sequence, read N- to C-terminus: Hexitol phosphatase B (222 aa).

Residue Asp-13 is the Nucleophile of the active site. A divalent metal cation contacts are provided by Asp-13 and Asp-15. Substrate is bound by residues 13–15, 115–116, and Lys-148; these read DMD and SA. Asp-15 (proton donor) is an active-site residue. Asp-173 lines the a divalent metal cation pocket.

This sequence belongs to the HAD-like hydrolase superfamily. CbbY/CbbZ/Gph/YieH family. Mg(2+) is required as a cofactor. Mn(2+) serves as cofactor. It depends on Co(2+) as a cofactor. The cofactor is Zn(2+).

It carries out the reaction sugar phosphate + H2O = sugar + phosphate.. The catalysed reaction is 2-deoxy-D-glucose 6-phosphate + H2O = 2-deoxy-D-glucose + phosphate. It catalyses the reaction D-mannitol 1-phosphate + H2O = D-mannitol + phosphate. The enzyme catalyses D-sorbitol 6-phosphate + H2O = D-sorbitol + phosphate. Its function is as follows. Sugar-phosphate phosphohydrolase that catalyzes the dephosphorylation of D-mannitol 1-phosphate and D-sorbitol 6-phosphate. Also catalyzes the dephosphorylation of 2-deoxyglucose 6-phosphate (2dGlu6P); this is a biologically important activity in vivo since it contributes to the elimination of this toxic compound and plays an important role in the resistance of E.coli to 2-deoxyglucose. To a lesser extent, is also able to dephosphorylate mannose 6-phosphate (Man6P), erythrose-4-phosphate, 2-deoxyribose-5-phosphate (2dRib5P), ribose-5-phosphate (Rib5P) and glucose-6-phosphate (Glu6P) in vitro. This chain is Hexitol phosphatase B, found in Escherichia coli (strain K12).